Reading from the N-terminus, the 214-residue chain is UPF0056 membrane protein aq_540 (214 aa).

A run of 6 helical transmembrane segments spans residues 17-37 (FLSL…ISLM), 47-67 (VIAL…LISG), 73-93 (FMGI…FLIA), 122-142 (LIPL…VLVL), 153-173 (VALF…YSLS), and 185-205 (INLI…QFVV).

This sequence belongs to the UPF0056 (MarC) family.

It is found in the cell membrane. In Aquifex aeolicus (strain VF5), this protein is UPF0056 membrane protein aq_540.